The chain runs to 187 residues: Putative manganese efflux pump MntP (187 aa).

Transmembrane regions (helical) follow at residues 3-23 (YYTL…VSVG), 39-59 (IALC…YVGS), 65-85 (ISEF…INMI), 106-126 (LTML…SFAF), 129-149 (VNIW…SLFG), and 166-186 (LLGG…HRVF).

It belongs to the MntP (TC 9.B.29) family.

The protein localises to the cell inner membrane. Its function is as follows. Probably functions as a manganese efflux pump. The polypeptide is Putative manganese efflux pump MntP (Actinobacillus succinogenes (strain ATCC 55618 / DSM 22257 / CCUG 43843 / 130Z)).